A 603-amino-acid chain; its full sequence is Phosphoribosylformylglycinamidine synthase subunit PurL (603 aa).

Residue His-32 is part of the active site. Residues Tyr-35 and Lys-68 each coordinate ATP. Residue Glu-70 coordinates Mg(2+). Substrate contacts are provided by residues 71–74 (SHNH) and Arg-93. The active-site Proton acceptor is His-72. A Mg(2+)-binding site is contributed by Asp-94. ATP contacts are provided by residues Asp-107 and 136 to 139 (GELR). Residues Gly-189 and Gln-208 each coordinate substrate. Asp-236 lines the Mg(2+) pocket. 280 to 282 (ESQ) serves as a coordination point for substrate. 4 residues coordinate ATP: Gly-388, Lys-429, Asn-442, and Gly-477. A Mg(2+)-binding site is contributed by Asn-478. Ser-480 is a binding site for substrate. Residues Ser-549 and His-556 each coordinate ATP.

It belongs to the FGAMS family. In terms of assembly, monomer. Part of the FGAM synthase complex composed of 1 PurL, 1 PurQ and 2 PurS subunits.

It localises to the cytoplasm. It catalyses the reaction N(2)-formyl-N(1)-(5-phospho-beta-D-ribosyl)glycinamide + L-glutamine + ATP + H2O = 2-formamido-N(1)-(5-O-phospho-beta-D-ribosyl)acetamidine + L-glutamate + ADP + phosphate + H(+). The protein operates within purine metabolism; IMP biosynthesis via de novo pathway; 5-amino-1-(5-phospho-D-ribosyl)imidazole from N(2)-formyl-N(1)-(5-phospho-D-ribosyl)glycinamide: step 1/2. In terms of biological role, part of the phosphoribosylformylglycinamidine synthase complex involved in the purines biosynthetic pathway. Catalyzes the ATP-dependent conversion of formylglycinamide ribonucleotide (FGAR) and glutamine to yield formylglycinamidine ribonucleotide (FGAM) and glutamate. The FGAM synthase complex is composed of three subunits. PurQ produces an ammonia molecule by converting glutamine to glutamate. PurL transfers the ammonia molecule to FGAR to form FGAM in an ATP-dependent manner. PurS interacts with PurQ and PurL and is thought to assist in the transfer of the ammonia molecule from PurQ to PurL. The chain is Phosphoribosylformylglycinamidine synthase subunit PurL from Thermotoga maritima (strain ATCC 43589 / DSM 3109 / JCM 10099 / NBRC 100826 / MSB8).